Consider the following 154-residue polypeptide: Endoribonuclease YbeY (154 aa).

Zn(2+)-binding residues include His-113, His-117, and His-123.

This sequence belongs to the endoribonuclease YbeY family. Zn(2+) is required as a cofactor.

The protein localises to the cytoplasm. Single strand-specific metallo-endoribonuclease involved in late-stage 70S ribosome quality control and in maturation of the 3' terminus of the 16S rRNA. This chain is Endoribonuclease YbeY, found in Vibrio parahaemolyticus serotype O3:K6 (strain RIMD 2210633).